Consider the following 727-residue polypeptide: DNA topoisomerase 3 (727 aa).

One can recognise a Toprim domain in the interval 3–136 (KTVVLAEKPS…IKRLWISSVT (134 aa)). Residues Glu-9 and Asp-105 each coordinate Mg(2+). The 441-residue stretch at 153-593 (YENLYHSAVA…DMKAYAHQTV (441 aa)) folds into the Topo IA-type catalytic domain. The segment at 187–192 (SCGRVQ) is interaction with DNA. Residue Tyr-310 is the O-(5'-phospho-DNA)-tyrosine intermediate of the active site. The segment covering 685–699 (KRKNKDKARATKRDV) has biased composition (basic and acidic residues). A disordered region spans residues 685 to 714 (KRKNKDKARATKRDVSSYMKKQNKDEPINN).

It belongs to the type IA topoisomerase family. The cofactor is Mg(2+).

The catalysed reaction is ATP-independent breakage of single-stranded DNA, followed by passage and rejoining.. Functionally, releases the supercoiling and torsional tension of DNA, which is introduced during the DNA replication and transcription, by transiently cleaving and rejoining one strand of the DNA duplex. Introduces a single-strand break via transesterification at a target site in duplex DNA. The scissile phosphodiester is attacked by the catalytic tyrosine of the enzyme, resulting in the formation of a DNA-(5'-phosphotyrosyl)-enzyme intermediate and the expulsion of a 3'-OH DNA strand. The free DNA strand then undergoes passage around the unbroken strand, thus removing DNA supercoils. Finally, in the religation step, the DNA 3'-OH attacks the covalent intermediate to expel the active-site tyrosine and restore the DNA phosphodiester backbone. The polypeptide is DNA topoisomerase 3 (Bacillus subtilis (strain 168)).